We begin with the raw amino-acid sequence, 178 residues long: CASP-like protein 2A2 (178 aa).

Residues 1 to 22 (MDKTDQTAIDESALVLNRTEKS) lie on the Cytoplasmic side of the membrane. A helical transmembrane segment spans residues 23–43 (AEAVLRVASMALSITGLVIMI). Over 44–69 (KNSISNEFGSVSYSNIGAFMYLVSAN) the chain is Extracellular. The chain crosses the membrane as a helical span at residues 70–90 (GVCAAYSLLSALAILALPCPI). Residues 91 to 96 (SKVQVR) are Cytoplasmic-facing. The chain crosses the membrane as a helical span at residues 97–117 (TLFLLDQVVTYVVLAAGAVSA). Topologically, residues 118–145 (ETVYLAYYGNIPITWSSACDSYGSFCHN) are extracellular. Residues 146–166 (ALISVVFTFVVSLLYMLLSLI) form a helical membrane-spanning segment. Topologically, residues 167–178 (SSYRLFTRFEAP) are cytoplasmic.

This sequence belongs to the Casparian strip membrane proteins (CASP) family. Homodimer and heterodimers. In terms of tissue distribution, mostly expressed in flowers and buds and, to a lower extent, in roots and yellow siliques. Localized in the floral organ abscission zone.

It localises to the cell membrane. Involved in floral organ shedding. This Arabidopsis thaliana (Mouse-ear cress) protein is CASP-like protein 2A2.